The chain runs to 230 residues: DNA repair protein RecO (230 aa).

Belongs to the RecO family.

In terms of biological role, involved in DNA repair and RecF pathway recombination. In Pseudoalteromonas translucida (strain TAC 125), this protein is DNA repair protein RecO.